We begin with the raw amino-acid sequence, 330 residues long: Ketol-acid reductoisomerase (NADP(+)) (330 aa).

Positions 2–182 constitute a KARI N-terminal Rossmann domain; sequence ARMYYDADAN…GGTRAGILET (181 aa). NADP(+) contacts are provided by residues 25 to 28, Ser51, Ser53, and 83 to 86; these read YGSQ and DEFQ. His108 is a catalytic residue. An NADP(+)-binding site is contributed by Gly134. A KARI C-terminal knotted domain is found at 183–328; sequence SFREETETDL…KDLRAMFSWL (146 aa). The Mg(2+) site is built by Asp191, Glu195, Glu227, and Glu231. Substrate is bound at residue Ser252.

This sequence belongs to the ketol-acid reductoisomerase family. Requires Mg(2+) as cofactor.

The enzyme catalyses (2R)-2,3-dihydroxy-3-methylbutanoate + NADP(+) = (2S)-2-acetolactate + NADPH + H(+). It catalyses the reaction (2R,3R)-2,3-dihydroxy-3-methylpentanoate + NADP(+) = (S)-2-ethyl-2-hydroxy-3-oxobutanoate + NADPH + H(+). It participates in amino-acid biosynthesis; L-isoleucine biosynthesis; L-isoleucine from 2-oxobutanoate: step 2/4. It functions in the pathway amino-acid biosynthesis; L-valine biosynthesis; L-valine from pyruvate: step 2/4. Its function is as follows. Involved in the biosynthesis of branched-chain amino acids (BCAA). Catalyzes an alkyl-migration followed by a ketol-acid reduction of (S)-2-acetolactate (S2AL) to yield (R)-2,3-dihydroxy-isovalerate. In the isomerase reaction, S2AL is rearranged via a Mg-dependent methyl migration to produce 3-hydroxy-3-methyl-2-ketobutyrate (HMKB). In the reductase reaction, this 2-ketoacid undergoes a metal-dependent reduction by NADPH to yield (R)-2,3-dihydroxy-isovalerate. The polypeptide is Ketol-acid reductoisomerase (NADP(+)) (Synechococcus elongatus (strain ATCC 33912 / PCC 7942 / FACHB-805) (Anacystis nidulans R2)).